The chain runs to 653 residues: Asparagine--tRNA ligase, cytoplasmic (653 aa).

It belongs to the class-II aminoacyl-tRNA synthetase family.

The protein resides in the cytoplasm. It carries out the reaction tRNA(Asn) + L-asparagine + ATP = L-asparaginyl-tRNA(Asn) + AMP + diphosphate + H(+). This chain is Asparagine--tRNA ligase, cytoplasmic (asnS1), found in Dictyostelium discoideum (Social amoeba).